The chain runs to 408 residues: Multidrug resistance protein MdtG (408 aa).

Transmembrane regions (helical) follow at residues 16–36 (LIVA…VMPF), 58–78 (IVFS…GGLA), 92–112 (LGMG…QFLI), 115–135 (ALLG…ATQV), 146–166 (TLST…GLLA), 173–193 (PVFF…LFCI), 224–244 (LFVT…ILTL), 256–276 (VAFI…LSAP), 290–310 (ILIT…YVQT), 319–339 (FLLG…LVYN), and 378–398 (AVFL…WNSL).

The protein belongs to the major facilitator superfamily. DHA1 family. MdtG (TC 2.A.1.2.20) subfamily.

The protein resides in the cell inner membrane. Functionally, confers resistance to fosfomycin and deoxycholate. The protein is Multidrug resistance protein MdtG of Escherichia coli O7:K1 (strain IAI39 / ExPEC).